A 647-amino-acid chain; its full sequence is Transcriptional repressor XBP1 (647 aa).

2 stretches are compositionally biased toward polar residues: residues 138–148 (SNKTPVSASPT) and 156–170 (STAS…LTKN). Disordered regions lie at residues 138–170 (SNKT…LTKN) and 264–295 (LLSS…STSS). The segment covering 264-282 (LLSSSTSSPPKRRTSTGST) has biased composition (low complexity). The HTH APSES-type domain maps to 282–395 (TFLDANASSS…PDFPKDCESW (114 aa)). The H-T-H motif DNA-binding region spans 318-339 (CQSYKDFLINELGPDQIDLPNL). Low complexity predominate over residues 425-434 (TNFTSTAVAR). Disordered regions lie at residues 425–455 (TNFT…HSKA), 485–508 (KKNS…GPRD), and 612–647 (QNQR…NSKQ). Positions 435 to 445 (PRQKPRPRPRQ) are enriched in basic residues. The segment covering 493–502 (SSTYTSQTSS) has biased composition (low complexity).

It is found in the nucleus. Functionally, transcriptional repressor which binds to the consensus sequence 5'-GCCTCGA[G/A]G[C/A]-3'. Represses CLN1 transcription. This Saccharomyces cerevisiae (strain ATCC 204508 / S288c) (Baker's yeast) protein is Transcriptional repressor XBP1 (XBP1).